Consider the following 248-residue polypeptide: MLQAASALRHAKRILVITGAGLSADSGLPTYRGVGGLYNGETEDGLPIEMALSGPMLRRDPELCWKYIAELGKACLGGEPNVAHYAIAQLQRIKPECWVLTQNVDGYHRAAGSPPERLIEIHGQLSPLFCQSCAAQDPQLSEHLQRPLPPLCRLCGGILRPPVVLFQEMLPERALETLYEQLATGYDAVLSIGTTASFPYIHEPVIRTRVSGGFTAEINPQPTDHSAQMDVFLQCRAAHVMAELISHI.

A Deacetylase sirtuin-type domain is found at 1–248 (MLQAASALRH…HVMAELISHI (248 aa)). NAD(+) contacts are provided by residues 19–38 (GAGL…GGLY) and 102–105 (QNVD). H122 acts as the Proton acceptor in catalysis. C130, C133, C152, and C155 together coordinate Zn(2+). NAD(+)-binding positions include 193–195 (GTT), 219–221 (NPQ), and A237.

It belongs to the sirtuin family. Class III subfamily. Zn(2+) serves as cofactor.

It localises to the cytoplasm. The enzyme catalyses N(6)-acetyl-L-lysyl-[protein] + NAD(+) + H2O = 2''-O-acetyl-ADP-D-ribose + nicotinamide + L-lysyl-[protein]. Functionally, NAD-dependent protein deacetylase which modulates the activities of several proteins which are inactive in their acetylated form. The polypeptide is NAD-dependent protein deacylase 2 (cobB2) (Pseudomonas syringae pv. tomato (strain ATCC BAA-871 / DC3000)).